Here is a 431-residue protein sequence, read N- to C-terminus: UDP-N-acetylmuramate--L-alanine ligase (431 aa).

Position 108-114 (108-114 (GSHGKTS)) interacts with ATP.

This sequence belongs to the MurCDEF family.

It localises to the cytoplasm. It carries out the reaction UDP-N-acetyl-alpha-D-muramate + L-alanine + ATP = UDP-N-acetyl-alpha-D-muramoyl-L-alanine + ADP + phosphate + H(+). The protein operates within cell wall biogenesis; peptidoglycan biosynthesis. In terms of biological role, cell wall formation. The chain is UDP-N-acetylmuramate--L-alanine ligase from Macrococcus caseolyticus (strain JCSC5402) (Macrococcoides caseolyticum).